Reading from the N-terminus, the 366-residue chain is Pyrimidine monooxygenase RutA (366 aa).

Residues 49–50 (IK), asparagine 115, glutamate 124, 140–141 (RY), and serine 190 contribute to the FMN site.

The protein belongs to the NtaA/SnaA/DszA monooxygenase family. RutA subfamily.

The catalysed reaction is uracil + FMNH2 + NADH + O2 = (Z)-3-ureidoacrylate + FMN + NAD(+) + H2O + H(+). The enzyme catalyses thymine + FMNH2 + NADH + O2 = (Z)-2-methylureidoacrylate + FMN + NAD(+) + H2O + H(+). In terms of biological role, catalyzes the pyrimidine ring opening between N-3 and C-4 by an unusual flavin hydroperoxide-catalyzed mechanism, adding oxygen atoms in the process to yield ureidoacrylate peracid, that immediately reacts with FMN forming ureidoacrylate and FMN-N(5)-oxide. The FMN-N(5)-oxide reacts spontaneously with NADH to produce FMN. Requires the flavin reductase RutF to regenerate FMN in vivo. The sequence is that of Pyrimidine monooxygenase RutA from Serratia proteamaculans (strain 568).